Consider the following 1122-residue polypeptide: Adhesin P1 (1122 aa).

The signal sequence occupies residues 1 to 30 (MKKLIFKLSVGITPLALIGLGSFGLAVSGA). Disordered regions lie at residues 183 to 209 (AGDT…GGAV), 244 to 273 (DYNS…GGRT), and 544 to 563 (QNSG…NGNE). Residues 195 to 208 (AGGGSGSSAAGGGA) show a composition bias toward gly residues. The span at 259-273 (LDSSESSESINGGRT) shows a compositional bias: polar residues. A helical membrane pass occupies residues 997–1021 (VLPVAISIPIIIIALALALGLGIGI). A disordered region spans residues 1066–1122 (KTPQMLQANKKDGASSPSKPSAPAAKKPTGPTKPSAPGAKPTAPAKPKAPAPTKKIE). The segment covering 1079–1122 (ASSPSKPSAPAAKKPTGPTKPSAPGAKPTAPAKPKAPAPTKKIE) has biased composition (low complexity).

It belongs to the adhesin P1 family.

It is found in the cell membrane. Functionally, could be involved in cytadherence. The protein is Adhesin P1 (gapA) of Mycoplasmoides gallisepticum (Mycoplasma gallisepticum).